A 207-amino-acid polypeptide reads, in one-letter code: dTTP/UTP pyrophosphatase (207 aa).

Asp87 functions as the Proton acceptor in the catalytic mechanism.

This sequence belongs to the Maf family. YhdE subfamily. Requires a divalent metal cation as cofactor.

It localises to the cytoplasm. It catalyses the reaction dTTP + H2O = dTMP + diphosphate + H(+). The enzyme catalyses UTP + H2O = UMP + diphosphate + H(+). In terms of biological role, nucleoside triphosphate pyrophosphatase that hydrolyzes dTTP and UTP. May have a dual role in cell division arrest and in preventing the incorporation of modified nucleotides into cellular nucleic acids. This Nitrosomonas europaea (strain ATCC 19718 / CIP 103999 / KCTC 2705 / NBRC 14298) protein is dTTP/UTP pyrophosphatase.